The following is a 358-amino-acid chain: Endo-1,4-beta-xylanase B (358 aa).

The first 17 residues, 1–17, serve as a signal peptide directing secretion; the sequence is MRFSASLLLALTGSAAA. The 313-residue stretch at 40-352 folds into the GH10 domain; sequence QGLDAAMKAA…KAAYNAFLRG (313 aa). Asparagine 136 is a glycosylation site (N-linked (GlcNAc...) asparagine). Glutamate 166 (proton donor) is an active-site residue. Catalysis depends on glutamate 274, which acts as the Nucleophile.

Belongs to the glycosyl hydrolase 10 (cellulase F) family.

It localises to the secreted. It carries out the reaction Endohydrolysis of (1-&gt;4)-beta-D-xylosidic linkages in xylans.. The protein operates within glycan degradation; xylan degradation. Its activity is regulated as follows. Partial inhibition of activity is detected in the presence of Ag(+), Cu2(+) and SDS. Like most fungal xylanases, activity is completely inhibited by Hg(2+) since Hg(2+) could interact with tryptophan residues and oxidize the indole ring. Beta-mercaptoethanol enhances the enzymatic activity by counteracting the oxidation effects of the S-S linkage between cysteine residues. Its function is as follows. Endo-1,4-beta-xylanase involved in the hydrolysis of xylan, a major structural heterogeneous polysaccharide found in plant biomass representing the second most abundant polysaccharide in the biosphere, after cellulose. Is more active on soluble wheat arabinoxylan (defined as 100%) than on birchwood xylan (75.4%) and beechwood xylan (70.8%), and less active on insoluble wheat arabinoxylan (17.4%). Xylose is the major hydrolysis product of XynB. This chain is Endo-1,4-beta-xylanase B, found in Humicola insolens (Soft-rot fungus).